Reading from the N-terminus, the 513-residue chain is Maturase K (513 aa).

It belongs to the intron maturase 2 family. MatK subfamily.

It is found in the plastid. Its subcellular location is the chloroplast. Its function is as follows. Usually encoded in the trnK tRNA gene intron. Probably assists in splicing its own and other chloroplast group II introns. In Byblis liniflora (Carnivorous plant), this protein is Maturase K.